The sequence spans 169 residues: Methanogen homoaconitase small subunit (169 aa).

A YLRT motif is present at residues 27–30; the sequence is YLRT.

Belongs to the LeuD family. LeuD type 2 subfamily. As to quaternary structure, heterotetramer of 2 HacA and 2 HacB proteins.

The catalysed reaction is (2R)-homocitrate = (2R,3S)-homoisocitrate. It catalyses the reaction (2R)-homocitrate = cis-homoaconitate + H2O. The enzyme catalyses (2R,3S)-homoisocitrate = cis-homoaconitate + H2O. It carries out the reaction cis-(homo)2aconitate + H2O = (2R,3S)-iso(homo)2citrate. The catalysed reaction is cis-(homo)3aconitate + H2O = (2R,3S)-iso(homo)3citrate. It participates in organic acid metabolism; 2-oxosuberate biosynthesis. Functionally, component of a hydro-lyase with broad substrate specificity for cis-unsaturated tricarboxylic acids. Catalyzes both the reversible dehydration of (R)-homocitrate ((R)-2-hydroxybutane-1,2,4-tricarboxylate) to produce cis-homoaconitate ((Z)-but-1-ene-1,2,4-tricarboxylate), and its hydration to homoisocitrate ((1R,2S)-1-hydroxybutane-1,2,4-tricarboxylate). Is also able to hydrate the analogous longer chain substrates cis-homo(2)-aconitate, cis-homo(3)-aconitate. These reactions are part of the biosynthesis pathway of coenzyme B. The protein is Methanogen homoaconitase small subunit (hacB) of Methanosarcina mazei (strain ATCC BAA-159 / DSM 3647 / Goe1 / Go1 / JCM 11833 / OCM 88) (Methanosarcina frisia).